A 264-amino-acid chain; its full sequence is E3 ubiquitin-protein ligase MARCHF8 (264 aa).

The tract at residues 15–47 (LGHSVSRSSNISKAGSPTSVSAPSSFPRTSVTP) is disordered. The span at 17–47 (HSVSRSSNISKAGSPTSVSAPSSFPRTSVTP) shows a compositional bias: polar residues. The RING-CH-type zinc-finger motif lies at 45-106 (VTPSSQDICR…ELCKFEFIME (62 aa)). Zn(2+) contacts are provided by C53, C56, C70, C72, H80, C83, C96, and C99. 2 helical membrane passes run 130–150 (CSVT…YVLI) and 170–190 (FWTK…FMYV).

The protein resides in the cytoplasmic vesicle membrane. The protein localises to the lysosome membrane. Its subcellular location is the early endosome membrane. The enzyme catalyses S-ubiquitinyl-[E2 ubiquitin-conjugating enzyme]-L-cysteine + [acceptor protein]-L-lysine = [E2 ubiquitin-conjugating enzyme]-L-cysteine + N(6)-ubiquitinyl-[acceptor protein]-L-lysine.. Its pathway is protein modification; protein ubiquitination. Functionally, E3 ubiquitin-protein ligase that mediates ubiquitination of cd86 and MHC class II proteins, such as hla-dr alpha and beta, and promotes their subsequent endocytosis and sorting to lysosomes via multivesicular bodies. The sequence is that of E3 ubiquitin-protein ligase MARCHF8 (marchf8) from Xenopus tropicalis (Western clawed frog).